Here is a 109-residue protein sequence, read N- to C-terminus: SRA stem-loop-interacting RNA-binding protein, mitochondrial (109 aa).

S15 is subject to Phosphoserine. Positions 19–103 (PVAFVRRIPW…RRPKLPQTSD (85 aa)) constitute an RRM domain. T101 is subject to Phosphothreonine. Phosphoserine is present on S102.

As to expression, ubiquitously expressed, with highest level in heart, liver, skeletal muscle and testis.

It localises to the mitochondrion. It is found in the nucleus. Functionally, RNA-binding protein that acts as a nuclear receptor corepressor. Probably acts by binding the SRA RNA, and repressing the SRA-mediated nuclear receptor coactivation. Binds the STR7 loop of SRA RNA. Also able to repress glucocorticoid (GR), androgen (AR), thyroid (TR) and VDR-mediated transactivation. This is SRA stem-loop-interacting RNA-binding protein, mitochondrial (SLIRP) from Homo sapiens (Human).